Here is a 423-residue protein sequence, read N- to C-terminus: D-tagatose-1,6-bisphosphate aldolase subunit GatZ (423 aa).

Belongs to the GatZ/KbaZ family. GatZ subfamily. In terms of assembly, forms a complex with GatY.

Its pathway is carbohydrate metabolism; D-tagatose 6-phosphate degradation; D-glyceraldehyde 3-phosphate and glycerone phosphate from D-tagatose 6-phosphate: step 2/2. In terms of biological role, component of the tagatose-1,6-bisphosphate aldolase GatYZ that is required for full activity and stability of the Y subunit. Could have a chaperone-like function for the proper and stable folding of GatY. When expressed alone, GatZ does not show any aldolase activity. Is involved in the catabolism of galactitol. This is D-tagatose-1,6-bisphosphate aldolase subunit GatZ from Salmonella paratyphi B (strain ATCC BAA-1250 / SPB7).